The following is a 391-amino-acid chain: 1-deoxy-D-xylulose 5-phosphate reductoisomerase (391 aa).

Residues Thr17, Gly18, Ser19, Ile20, Asn47, and Asn130 each contribute to the NADPH site. Lys131 contributes to the 1-deoxy-D-xylulose 5-phosphate binding site. Glu132 is an NADPH binding site. Asp156 contacts Mn(2+). 1-deoxy-D-xylulose 5-phosphate is bound by residues Ser157, Glu158, Ser182, and His205. Glu158 lines the Mn(2+) pocket. Gly211 contacts NADPH. 1-deoxy-D-xylulose 5-phosphate contacts are provided by Ser218, Asn223, Lys224, and Glu227. Glu227 contributes to the Mn(2+) binding site.

This sequence belongs to the DXR family. It depends on Mg(2+) as a cofactor. Mn(2+) serves as cofactor.

The catalysed reaction is 2-C-methyl-D-erythritol 4-phosphate + NADP(+) = 1-deoxy-D-xylulose 5-phosphate + NADPH + H(+). It participates in isoprenoid biosynthesis; isopentenyl diphosphate biosynthesis via DXP pathway; isopentenyl diphosphate from 1-deoxy-D-xylulose 5-phosphate: step 1/6. Functionally, catalyzes the NADPH-dependent rearrangement and reduction of 1-deoxy-D-xylulose-5-phosphate (DXP) to 2-C-methyl-D-erythritol 4-phosphate (MEP). The sequence is that of 1-deoxy-D-xylulose 5-phosphate reductoisomerase from Sinorhizobium medicae (strain WSM419) (Ensifer medicae).